The following is a 330-amino-acid chain: Putative [LysW]-L-2-aminoadipate/[LysW]-L-glutamate phosphate reductase (330 aa).

10–13 provides a ligand contact to NADP(+); it reads SGYI. Cys-142 is a catalytic residue. Residue Asn-297 coordinates NADP(+).

This sequence belongs to the NAGSA dehydrogenase family. Type 1 subfamily. LysY sub-subfamily.

The protein resides in the cytoplasm. The enzyme catalyses [amino-group carrier protein]-C-terminal-N-(1-carboxy-5-oxopentan-1-yl)-L-glutamine + phosphate + NADP(+) = [amino-group carrier protein]-C-terminal-N-(1-carboxy-5-phosphooxy-5-oxopentan-1-yl)-L-glutamine + NADPH + H(+). It carries out the reaction [amino-group carrier protein]-C-terminal-gamma-(L-glutamyl-5-semialdehyde)-L-glutamate + phosphate + NADP(+) = [amino-group carrier protein]-C-terminal-gamma-(5-phospho-L-glutamyl)-L-glutamate + NADPH + H(+). It functions in the pathway amino-acid biosynthesis; L-lysine biosynthesis via AAA pathway; L-lysine from L-alpha-aminoadipate (Thermus route): step 3/5. The protein operates within amino-acid biosynthesis; L-arginine biosynthesis. Its function is as follows. Involved in both the arginine and lysine biosynthetic pathways. The sequence is that of Putative [LysW]-L-2-aminoadipate/[LysW]-L-glutamate phosphate reductase from Pyrococcus furiosus (strain ATCC 43587 / DSM 3638 / JCM 8422 / Vc1).